We begin with the raw amino-acid sequence, 434 residues long: Enolase (434 aa).

Q163 is a binding site for (2R)-2-phosphoglycerate. The active-site Proton donor is E205. D242, E291, and D318 together coordinate Mg(2+). Residues K343, R372, S373, and K394 each coordinate (2R)-2-phosphoglycerate. Catalysis depends on K343, which acts as the Proton acceptor.

The protein belongs to the enolase family. The cofactor is Mg(2+).

The protein resides in the cytoplasm. It localises to the secreted. The protein localises to the cell surface. The catalysed reaction is (2R)-2-phosphoglycerate = phosphoenolpyruvate + H2O. The protein operates within carbohydrate degradation; glycolysis; pyruvate from D-glyceraldehyde 3-phosphate: step 4/5. In terms of biological role, catalyzes the reversible conversion of 2-phosphoglycerate (2-PG) into phosphoenolpyruvate (PEP). It is essential for the degradation of carbohydrates via glycolysis. The chain is Enolase from Streptococcus thermophilus (strain ATCC BAA-491 / LMD-9).